Here is a 93-residue protein sequence, read N- to C-terminus: Putative regulatory protein Clos_1422 (93 aa).

It belongs to the RemA family.

The sequence is that of Putative regulatory protein Clos_1422 from Alkaliphilus oremlandii (strain OhILAs) (Clostridium oremlandii (strain OhILAs)).